The sequence spans 144 residues: Fluoride-specific ion channel FluC 1 (144 aa).

4 helical membrane passes run 11-31 (LIYI…YYLG), 44-64 (LATL…TTYI), 74-94 (VITG…TFSV), and 107-127 (IAFL…GLGY). Residues glycine 84 and threonine 87 each contribute to the Na(+) site.

Belongs to the fluoride channel Fluc/FEX (TC 1.A.43) family.

The protein localises to the cell membrane. It carries out the reaction fluoride(in) = fluoride(out). With respect to regulation, na(+) is not transported, but it plays an essential structural role and its presence is essential for fluoride channel function. Fluoride-specific ion channel. Important for reducing fluoride concentration in the cell, thus reducing its toxicity. The sequence is that of Fluoride-specific ion channel FluC 1 from Bacillus cereus (strain ATCC 14579 / DSM 31 / CCUG 7414 / JCM 2152 / NBRC 15305 / NCIMB 9373 / NCTC 2599 / NRRL B-3711).